The chain runs to 191 residues: Gene BABR protein 1 (191 aa).

The chain is Gene BABR protein 1 from Babesia bovis.